A 313-amino-acid chain; its full sequence is Esterase mpl1 (313 aa).

Active-site charge relay system residues include Ser-174, Asp-259, and His-287.

The protein belongs to the LovG family.

Its pathway is mycotoxin biosynthesis. Functionally, esterase; part of the gene cluster that mediates the biosynthesis of the mycotoxin citrinin, a hepato-nephrotoxic compound to humans due to inhibition of respiration complex III. The pathway begins with the synthesis of a keto-aldehyde intermediate by the citrinin PKS (pksCT) from successive condensations of 4 malonyl-CoA units, presumably with a simple acetyl-CoA starter unit. Release of the keto-aldehyde intermediate is consistent with the presence of the C-terminal reductive release domain. Mp11 collaborates with pksCT by catalyzing the hydrolysis of ACP-bound acyl intermediates to free the ACP from stalled intermediates. Mpl2 then catalyzes the oxidation of the C-12 methyl of the ketone intermediate to an alcohol intermediate which is further oxidized by the oxidoreductase mpl7 to produce a bisaldehyde intermediate. The fourth catalytic step is catalyzed by the mpl4 aldehyde dehydrogenase. The final transformation is the reduction of C-3 by mpl6 to provide the chemically stable citrinin nucleus. This Monascus purpureus (Red mold) protein is Esterase mpl1.